The sequence spans 225 residues: MDCETRGRGRRGRGNRNEESRDVRLSKSLSYVLRHGASKMGLQMNSDGFVFVEELLAHQQFRSFSVDDVERVVASNDKQRFKLCKHPEDDRLQIRANQGHSVQVTDLELREISQDDQDYPREAVHGSYMKHWPSIRSQGLSRMNRTHIHLAPGLPGEGRVISGMRQSCDLAVYIDVTKAMSDGIKFFWSENGVLLTPGDAAGILAPCYFSRAQRLKPLPCDIELH.

Positions methionine 1 to arginine 21 are disordered.

Belongs to the KptA/TPT1 family.

It catalyses the reaction 2'-phospho-[ligated tRNA] + NAD(+) = mature tRNA + ADP-alpha-D-ribose 1'',2''-cyclic phosphate + nicotinamide. Its function is as follows. Catalyzes the last step of tRNA splicing, the transfer of the splice junction 2'-phosphate from ligated tRNA to NAD to produce ADP-ribose 1''-2'' cyclic phosphate. The protein is tRNA 2'-phosphotransferase 1 (trpt1) of Danio rerio (Zebrafish).